Here is a 283-residue protein sequence, read N- to C-terminus: 4-diphosphocytidyl-2-C-methyl-D-erythritol kinase (283 aa).

The active site involves Lys13. 96-106 provides a ligand contact to ATP; that stretch reads PMGGGIGGGSS. The active site involves Asp138.

The protein belongs to the GHMP kinase family. IspE subfamily.

The enzyme catalyses 4-CDP-2-C-methyl-D-erythritol + ATP = 4-CDP-2-C-methyl-D-erythritol 2-phosphate + ADP + H(+). It participates in isoprenoid biosynthesis; isopentenyl diphosphate biosynthesis via DXP pathway; isopentenyl diphosphate from 1-deoxy-D-xylulose 5-phosphate: step 3/6. Its function is as follows. Catalyzes the phosphorylation of the position 2 hydroxy group of 4-diphosphocytidyl-2C-methyl-D-erythritol. This chain is 4-diphosphocytidyl-2-C-methyl-D-erythritol kinase, found in Pseudomonas fluorescens (strain Pf0-1).